A 572-amino-acid chain; its full sequence is Urease subunit alpha (572 aa).

Residues 134 to 572 enclose the Urease domain; that stretch reads GGIDAHVHFI…LPMAQRYFLF (439 aa). The Ni(2+) site is built by histidine 139, histidine 141, and lysine 222. Lysine 222 is subject to N6-carboxylysine. Substrate is bound at residue histidine 224. Histidine 251 and histidine 277 together coordinate Ni(2+). The active-site Proton donor is histidine 325. A Ni(2+)-binding site is contributed by aspartate 365.

This sequence belongs to the metallo-dependent hydrolases superfamily. Urease alpha subunit family. In terms of assembly, heterotrimer of UreA (gamma), UreB (beta) and UreC (alpha) subunits. Three heterotrimers associate to form the active enzyme. Ni cation is required as a cofactor. In terms of processing, carboxylation allows a single lysine to coordinate two nickel ions.

The protein localises to the cytoplasm. It carries out the reaction urea + 2 H2O + H(+) = hydrogencarbonate + 2 NH4(+). It participates in nitrogen metabolism; urea degradation; CO(2) and NH(3) from urea (urease route): step 1/1. The polypeptide is Urease subunit alpha (Synechococcus sp. (strain JA-2-3B'a(2-13)) (Cyanobacteria bacterium Yellowstone B-Prime)).